The sequence spans 350 residues: Atypical chemokine receptor 4 (350 aa).

At methionine 1 to valine 42 the chain is on the extracellular side. N-linked (GlcNAc...) asparagine glycans are attached at residues asparagine 6 and asparagine 19. Residues phenylalanine 43–valine 63 form a helical membrane-spanning segment. The Cytoplasmic portion of the chain corresponds to alanine 64 to aspartate 87. A helical transmembrane segment spans residues leucine 88–glycine 108. At lysine 109–lysine 113 the chain is on the extracellular side. Cysteine 112 and cysteine 184 form a disulfide bridge. A helical transmembrane segment spans residues isoleucine 114–serine 134. At isoleucine 135–cysteine 154 the chain is on the cytoplasmic side. The helical transmembrane segment at tryptophan 155 to phenylalanine 175 threads the bilayer. At tyrosine 176–glutamine 201 the chain is on the extracellular side. A helical membrane pass occupies residues methionine 202–isoleucine 222. Residues threonine 223–lysine 240 are Cytoplasmic-facing. The helical transmembrane segment at valine 241 to phenylalanine 261 threads the bilayer. Over cysteine 262–glutamate 289 the chain is Extracellular. A helical membrane pass occupies residues serine 290–phenylalanine 310. Residues lysine 311–isoleucine 350 are Cytoplasmic-facing.

Belongs to the G-protein coupled receptor 1 family. Atypical chemokine receptor subfamily. As to quaternary structure, forms heteromers with CXCR3. Interacts with ARRB1 and ARRB2. In terms of processing, the Ser/Thr residues in the C-terminal cytoplasmic tail may be phosphorylated. As to expression, predominantly expressed in heart. Lower expression in lung, pancreas, spleen, colon, skeletal muscle and small intestine.

The protein localises to the early endosome. It localises to the recycling endosome. It is found in the cell membrane. In terms of biological role, atypical chemokine receptor that controls chemokine levels and localization via high-affinity chemokine binding that is uncoupled from classic ligand-driven signal transduction cascades, resulting instead in chemokine sequestration, degradation, or transcytosis. Also known as interceptor (internalizing receptor) or chemokine-scavenging receptor or chemokine decoy receptor. Acts as a receptor for chemokines CCL2, CCL8, CCL13, CCL19, CCL21 and CCL25. Chemokine-binding does not activate G-protein-mediated signal transduction but instead induces beta-arrestin recruitment, leading to ligand internalization. Plays an important role in controlling the migration of immune and cancer cells that express chemokine receptors CCR7 and CCR9, by reducing the availability of CCL19, CCL21, and CCL25 through internalization. Negatively regulates CXCR3-induced chemotaxis. Regulates T-cell development in the thymus. The polypeptide is Atypical chemokine receptor 4 (ACKR4) (Homo sapiens (Human)).